We begin with the raw amino-acid sequence, 447 residues long: UDP-N-acetylmuramoylalanine--D-glutamate ligase (447 aa).

130-136 (GTSGKTT) contributes to the ATP binding site.

The protein belongs to the MurCDEF family.

The protein localises to the cytoplasm. The enzyme catalyses UDP-N-acetyl-alpha-D-muramoyl-L-alanine + D-glutamate + ATP = UDP-N-acetyl-alpha-D-muramoyl-L-alanyl-D-glutamate + ADP + phosphate + H(+). The protein operates within cell wall biogenesis; peptidoglycan biosynthesis. Its function is as follows. Cell wall formation. Catalyzes the addition of glutamate to the nucleotide precursor UDP-N-acetylmuramoyl-L-alanine (UMA). The polypeptide is UDP-N-acetylmuramoylalanine--D-glutamate ligase (Oleidesulfovibrio alaskensis (strain ATCC BAA-1058 / DSM 17464 / G20) (Desulfovibrio alaskensis)).